Here is an 846-residue protein sequence, read N- to C-terminus: DNA mismatch repair protein MutS (846 aa).

ATP is bound at residue 610–617; sequence GPNMGGKS.

The protein belongs to the DNA mismatch repair MutS family.

This protein is involved in the repair of mismatches in DNA. It is possible that it carries out the mismatch recognition step. This protein has a weak ATPase activity. This is DNA mismatch repair protein MutS from Legionella pneumophila (strain Paris).